We begin with the raw amino-acid sequence, 289 residues long: Delta-sarcoglycan (289 aa).

Over 1 to 37 (MPQEQYSHHRSTMPSSEGPHIYKVGIYGWRKRCLYFF) the chain is Cytoplasmic. The helical; Signal-anchor for type II membrane protein transmembrane segment at 38 to 56 (VLLLMILILVNLAMTIWIL) threads the bilayer. Topologically, residues 57–289 (KVMNFTIDGM…TCQINTSVCL (233 aa)) are extracellular. Residues Asn-60 and Asn-108 are each glycosylated (N-linked (GlcNAc...) asparagine). Cystine bridges form between Cys-263/Cys-288 and Cys-265/Cys-281. N-linked (GlcNAc...) asparagine glycosylation occurs at Asn-284.

It belongs to the sarcoglycan beta/delta/gamma/zeta family. In terms of assembly, interacts with FLNC. Cross-link to form 2 major subcomplexes: one consisting of SGCB, SGCD and SGCG and the other consisting of SGCB and SGCD. The association between SGCB and SGCG is particularly strong while SGCA is loosely associated with the other sarcoglycans. Interacts with DAG1. Disulfide bonds are present. In terms of tissue distribution, most strongly expressed in skeletal and heart muscle. Also detected in proliferating myoblasts.

It is found in the cell membrane. The protein resides in the sarcolemma. Its subcellular location is the cytoplasm. It localises to the cytoskeleton. In terms of biological role, component of the sarcoglycan complex, a subcomplex of the dystrophin-glycoprotein complex which forms a link between the F-actin cytoskeleton and the extracellular matrix. This chain is Delta-sarcoglycan (Sgcd), found in Mus musculus (Mouse).